Reading from the N-terminus, the 61-residue chain is Small ribosomal subunit protein uS14B (61 aa).

Zn(2+)-binding residues include cysteine 24, cysteine 27, cysteine 40, and cysteine 43.

Belongs to the universal ribosomal protein uS14 family. Zinc-binding uS14 subfamily. Part of the 30S ribosomal subunit. Contacts proteins S3 and S10. Zn(2+) serves as cofactor.

Functionally, binds 16S rRNA, required for the assembly of 30S particles and may also be responsible for determining the conformation of the 16S rRNA at the A site. The chain is Small ribosomal subunit protein uS14B from Streptococcus pyogenes serotype M6 (strain ATCC BAA-946 / MGAS10394).